The primary structure comprises 191 residues: Ribonuclease HII (191 aa).

One can recognise an RNase H type-2 domain in the interval 16–191 (INLIGIDEAG…KLHRKSFKLL (176 aa)). The a divalent metal cation site is built by Asp-22, Glu-23, and Asp-110.

The protein belongs to the RNase HII family. Requires Mn(2+) as cofactor. Mg(2+) serves as cofactor.

It is found in the cytoplasm. The catalysed reaction is Endonucleolytic cleavage to 5'-phosphomonoester.. Its function is as follows. Endonuclease that specifically degrades the RNA of RNA-DNA hybrids. The chain is Ribonuclease HII from Campylobacter jejuni subsp. doylei (strain ATCC BAA-1458 / RM4099 / 269.97).